The chain runs to 256 residues: Ferritin-3, chloroplastic (256 aa).

The transit peptide at 1–49 (MLLRTASSFSLLKANADHILPLPNSSSSGIIRYSQSLGKNLVPCATKDT) directs the protein to the chloroplast. The extension peptide (EP) stretch occupies residues 50 to 82 (NNRPLTGVVFEPFEEVKKELDLVPTVPQASLAR). Positions 83-236 (QKYTDDCEAT…EYVAQLRRVG (154 aa)) constitute a Ferritin-like diiron domain. Positions 100, 135, 138, 184, and 218 each coordinate Fe cation.

It belongs to the ferritin family. In terms of assembly, oligomer of 24 subunits. There are two types of subunits: L (light) chain and H (heavy) chain. The major chain can be light or heavy, depending on the species and tissue type. The functional molecule forms a roughly spherical shell with a diameter of 12 nm and contains a central cavity into which the insoluble mineral iron core is deposited.

It is found in the plastid. Its subcellular location is the chloroplast. It carries out the reaction 4 Fe(2+) + O2 + 4 H(+) = 4 Fe(3+) + 2 H2O. Its function is as follows. Stores iron in a soluble, non-toxic, readily available form. Important for iron homeostasis. Has ferroxidase activity. Iron is taken up in the ferrous form and deposited as ferric hydroxides after oxidation. This Glycine max (Soybean) protein is Ferritin-3, chloroplastic.